We begin with the raw amino-acid sequence, 165 residues long: Biosynthetic peptidoglycan transglycosylase (165 aa).

It belongs to the glycosyltransferase 51 family.

It localises to the cell inner membrane. The catalysed reaction is [GlcNAc-(1-&gt;4)-Mur2Ac(oyl-L-Ala-gamma-D-Glu-L-Lys-D-Ala-D-Ala)](n)-di-trans,octa-cis-undecaprenyl diphosphate + beta-D-GlcNAc-(1-&gt;4)-Mur2Ac(oyl-L-Ala-gamma-D-Glu-L-Lys-D-Ala-D-Ala)-di-trans,octa-cis-undecaprenyl diphosphate = [GlcNAc-(1-&gt;4)-Mur2Ac(oyl-L-Ala-gamma-D-Glu-L-Lys-D-Ala-D-Ala)](n+1)-di-trans,octa-cis-undecaprenyl diphosphate + di-trans,octa-cis-undecaprenyl diphosphate + H(+). Its pathway is cell wall biogenesis; peptidoglycan biosynthesis. Functionally, peptidoglycan polymerase that catalyzes glycan chain elongation from lipid-linked precursors. In Neisseria meningitidis, this protein is Biosynthetic peptidoglycan transglycosylase.